The following is a 218-amino-acid chain: Superoxide dismutase [Mn] 2, mitochondrial (218 aa).

The N-terminal 24 residues, 1 to 24, are a transit peptide targeting the mitochondrion; sequence MLQSTARTASKLVQPVAGVLAVRS. Mn(2+) is bound by residues His-50, His-98, Asp-179, and His-183.

Belongs to the iron/manganese superoxide dismutase family. As to quaternary structure, homotetramer. Mn(2+) serves as cofactor. In terms of tissue distribution, expressed in pharynx and rectum. Upon thermal stress, expressed in vulva, body wall muscles and hypodermis.

It localises to the mitochondrion. The enzyme catalyses 2 superoxide + 2 H(+) = H2O2 + O2. Functionally, destroys superoxide anion radicals which are normally produced within the cells and which are toxic to biological systems. This is Superoxide dismutase [Mn] 2, mitochondrial (sod-3) from Caenorhabditis elegans.